Consider the following 161-residue polypeptide: Nucleotide-binding protein Sden_0770 (161 aa).

It belongs to the YajQ family.

In terms of biological role, nucleotide-binding protein. This Shewanella denitrificans (strain OS217 / ATCC BAA-1090 / DSM 15013) protein is Nucleotide-binding protein Sden_0770.